The primary structure comprises 222 residues: Small ribosomal subunit protein eS1 (222 aa).

It belongs to the eukaryotic ribosomal protein eS1 family.

This chain is Small ribosomal subunit protein eS1, found in Pyrobaculum calidifontis (strain DSM 21063 / JCM 11548 / VA1).